A 549-amino-acid polypeptide reads, in one-letter code: Hydroxylamine reductase (549 aa).

[4Fe-4S] cluster-binding residues include C5, C8, C17, and C23. The hybrid [4Fe-2O-2S] cluster site is built by H243, E267, C311, C403, C431, C456, E491, and K493. C403 carries the post-translational modification Cysteine persulfide.

This sequence belongs to the HCP family. [4Fe-4S] cluster serves as cofactor. It depends on hybrid [4Fe-2O-2S] cluster as a cofactor.

It is found in the cytoplasm. It carries out the reaction A + NH4(+) + H2O = hydroxylamine + AH2 + H(+). Its function is as follows. Catalyzes the reduction of hydroxylamine to form NH(3) and H(2)O. The sequence is that of Hydroxylamine reductase from Desulfitobacterium hafniense (strain DSM 10664 / DCB-2).